We begin with the raw amino-acid sequence, 228 residues long: Urease accessory protein UreF 1 (228 aa).

The protein belongs to the UreF family. As to quaternary structure, ureD, UreF and UreG form a complex that acts as a GTP-hydrolysis-dependent molecular chaperone, activating the urease apoprotein by helping to assemble the nickel containing metallocenter of UreC. The UreE protein probably delivers the nickel.

It is found in the cytoplasm. Its function is as follows. Required for maturation of urease via the functional incorporation of the urease nickel metallocenter. The sequence is that of Urease accessory protein UreF 1 from Brucella anthropi (strain ATCC 49188 / DSM 6882 / CCUG 24695 / JCM 21032 / LMG 3331 / NBRC 15819 / NCTC 12168 / Alc 37) (Ochrobactrum anthropi).